We begin with the raw amino-acid sequence, 358 residues long: Magnesium-protoporphyrin IX monomethyl ester [oxidative] cyclase 2 (358 aa).

The protein belongs to the AcsF family. Fe cation is required as a cofactor.

It carries out the reaction Mg-protoporphyrin IX 13-monomethyl ester + 3 NADPH + 3 O2 + 2 H(+) = 3,8-divinyl protochlorophyllide a + 3 NADP(+) + 5 H2O. Its pathway is porphyrin-containing compound metabolism; chlorophyll biosynthesis (light-independent). Catalyzes the formation of the isocyclic ring in chlorophyll biosynthesis. Mediates the cyclase reaction, which results in the formation of divinylprotochlorophyllide (Pchlide) characteristic of all chlorophylls from magnesium-protoporphyrin IX 13-monomethyl ester (MgPMME). The protein is Magnesium-protoporphyrin IX monomethyl ester [oxidative] cyclase 2 of Synechocystis sp. (strain ATCC 27184 / PCC 6803 / Kazusa).